Reading from the N-terminus, the 95-residue chain is MAKEELIEMDGVVTDVLPDSRFKVQLDNGHEVMAYSAGKMKKHRIRIMVGDRVDMEMTPYDLTKARITYRHKVGGPPGPVTGGGNRPPPRQPRRR.

The S1-like domain maps to 1-72 (MAKEELIEMD…TKARITYRHK (72 aa)). Residues 70-95 (RHKVGGPPGPVTGGGNRPPPRQPRRR) are disordered. A compositionally biased stretch (pro residues) spans 86-95 (RPPPRQPRRR).

This sequence belongs to the IF-1 family. In terms of assembly, component of the 30S ribosomal translation pre-initiation complex which assembles on the 30S ribosome in the order IF-2 and IF-3, IF-1 and N-formylmethionyl-tRNA(fMet); mRNA recruitment can occur at any time during PIC assembly.

The protein localises to the cytoplasm. One of the essential components for the initiation of protein synthesis. Stabilizes the binding of IF-2 and IF-3 on the 30S subunit to which N-formylmethionyl-tRNA(fMet) subsequently binds. Helps modulate mRNA selection, yielding the 30S pre-initiation complex (PIC). Upon addition of the 50S ribosomal subunit IF-1, IF-2 and IF-3 are released leaving the mature 70S translation initiation complex. The protein is Translation initiation factor IF-1 of Rhodospirillum rubrum (strain ATCC 11170 / ATH 1.1.1 / DSM 467 / LMG 4362 / NCIMB 8255 / S1).